The chain runs to 144 residues: Large ribosomal subunit protein uL16m (144 aa).

It belongs to the universal ribosomal protein uL16 family.

It is found in the mitochondrion. This is Large ribosomal subunit protein uL16m (mrpl16) from Dictyostelium discoideum (Social amoeba).